The chain runs to 304 residues: Lipid droplet-associated triacylglycerol lipase (304 aa).

The Lumenal portion of the chain corresponds to 1-155 (MTVKEYTKSK…MGIKMTAALR (155 aa)). The N-linked (GlcNAc...) asparagine glycan is linked to Asn-95. The GXSXG motif lies at 107-111 (GHSVG). The active-site Nucleophile is Ser-109. An intramembrane segment occupies 156-176 (YIPPLAHVVSLFSYIFFYWIL). The Lumenal segment spans residues 177–304 (SEGFSRFIID…HAEYAINAFF (128 aa)).

Belongs to the AB hydrolase superfamily. LDAH family.

Its subcellular location is the lipid droplet. It localises to the membrane. It catalyses the reaction a triacylglycerol + H2O = a diacylglycerol + a fatty acid + H(+). Functionally, shows both triacylglycerol (TAG) lipase and ester hydrolase activities. May play a role in TAG homeostasis. The polypeptide is Lipid droplet-associated triacylglycerol lipase (Saccharomyces cerevisiae (strain ATCC 204508 / S288c) (Baker's yeast)).